A 122-amino-acid polypeptide reads, in one-letter code: Large ribosomal subunit protein uL18 (122 aa).

The protein belongs to the universal ribosomal protein uL18 family. As to quaternary structure, part of the 50S ribosomal subunit; part of the 5S rRNA/L5/L18/L25 subcomplex. Contacts the 5S and 23S rRNAs.

In terms of biological role, this is one of the proteins that bind and probably mediate the attachment of the 5S RNA into the large ribosomal subunit, where it forms part of the central protuberance. The sequence is that of Large ribosomal subunit protein uL18 from Citrifermentans bemidjiense (strain ATCC BAA-1014 / DSM 16622 / JCM 12645 / Bem) (Geobacter bemidjiensis).